Reading from the N-terminus, the 187-residue chain is Oligoribonuclease (187 aa).

The Exonuclease domain occupies 7-170 (LCWLDMEMTG…DDILESIEEM (164 aa)). Residue Y128 is part of the active site.

The protein belongs to the oligoribonuclease family.

It localises to the cytoplasm. 3'-to-5' exoribonuclease specific for small oligoribonucleotides. In Neisseria meningitidis serogroup A / serotype 4A (strain DSM 15465 / Z2491), this protein is Oligoribonuclease.